Consider the following 141-residue polypeptide: MSKAIRIARLTSATCEQIQARMLEACRQIASDHGLVIESAGWRGLEPGFSFEPAFRISIPAPDGKPLNLDREMFAVLAEQYGLEAADFEREFIAGGERFRITGIDPRRPKYPISVERIPDHRGFKFTADNVAMLLKAQAKP.

This is an uncharacterized protein from Sinorhizobium fredii (strain NBRC 101917 / NGR234).